Consider the following 74-residue polypeptide: Brevinin-2MT1 (74 aa).

The first 22 residues, 1 to 22, serve as a signal peptide directing secretion; the sequence is MFTMKKSLLVLFFLGTISLSLC. Residues 23–39 constitute a propeptide, removed in mature form; that stretch reads EEERNADEDDGEMTEEE. A disulfide bridge links Cys-68 with Cys-74.

It belongs to the frog skin active peptide (FSAP) family. Brevinin subfamily. As to expression, expressed by the skin glands.

It is found in the secreted. Antimicrobial peptide. Active against a variety of Gram-negative and Gram-positive bacterial strains. Active against fungi. Shows hemolytic activity against human erythrocytes. The polypeptide is Brevinin-2MT1 (Amolops mantzorum (Sichuan torrent frog)).